Here is a 339-residue protein sequence, read N- to C-terminus: Undecaprenyl-phosphate 4-deoxy-4-formamido-L-arabinose transferase (339 aa).

2 helical membrane-spanning segments follow: residues 235 to 255 and 269 to 289; these read LSLV…FLLV and LFVL…GMGL.

Belongs to the glycosyltransferase 2 family.

Its subcellular location is the cell inner membrane. It catalyses the reaction UDP-4-deoxy-4-formamido-beta-L-arabinose + di-trans,octa-cis-undecaprenyl phosphate = 4-deoxy-4-formamido-alpha-L-arabinopyranosyl di-trans,octa-cis-undecaprenyl phosphate + UDP. It functions in the pathway glycolipid biosynthesis; 4-amino-4-deoxy-alpha-L-arabinose undecaprenyl phosphate biosynthesis; 4-amino-4-deoxy-alpha-L-arabinose undecaprenyl phosphate from UDP-4-deoxy-4-formamido-beta-L-arabinose and undecaprenyl phosphate: step 1/2. Its pathway is bacterial outer membrane biogenesis; lipopolysaccharide biosynthesis. In terms of biological role, catalyzes the transfer of 4-deoxy-4-formamido-L-arabinose from UDP to undecaprenyl phosphate. The modified arabinose is attached to lipid A and is required for resistance to polymyxin and cationic antimicrobial peptides. The chain is Undecaprenyl-phosphate 4-deoxy-4-formamido-L-arabinose transferase from Pseudomonas paraeruginosa (strain DSM 24068 / PA7) (Pseudomonas aeruginosa (strain PA7)).